We begin with the raw amino-acid sequence, 64 residues long: Weak toxin CM-9a (64 aa).

Disulfide bonds link Cys-3/Cys-24, Cys-6/Cys-11, Cys-17/Cys-41, Cys-45/Cys-56, and Cys-57/Cys-62.

This sequence belongs to the three-finger toxin family. Ancestral subfamily. Orphan group II sub-subfamily. In terms of tissue distribution, expressed by the venom gland.

Its subcellular location is the secreted. Functionally, binds with low affinity to muscular (alpha-1-beta-1-delta-epsilon/CHRNA1-CHRNB1-CHRND-CHRNE) and very low affinity to neuronal (alpha-7/CHRNA7) nicotinic acetylcholine receptor (nAChR). The protein is Weak toxin CM-9a of Naja kaouthia (Monocled cobra).